Reading from the N-terminus, the 515-residue chain is Zinc metalloproteinase-disintegrin BA-5A (515 aa).

The N-terminal stretch at 1–20 (MMQVLLVTICLAVFPYQGSS) is a signal peptide. A propeptide spanning residues 21-193 (IILESGNVND…KEASQLVATS (173 aa)) is cleaved from the precursor. The region spanning 203–399 (RYIKYFIVVD…YKPDCTLIRP (197 aa)) is the Peptidase M12B domain. An N-linked (GlcNAc...) asparagine glycan is attached at asparagine 263. Cystine bridges form between cysteine 314–cysteine 394, cysteine 354–cysteine 378, cysteine 356–cysteine 361, cysteine 410–cysteine 429, cysteine 421–cysteine 439, cysteine 423–cysteine 434, cysteine 433–cysteine 456, cysteine 447–cysteine 453, cysteine 452–cysteine 478, cysteine 465–cysteine 485, and cysteine 472–cysteine 497. A Zn(2+)-binding site is contributed by histidine 339. The active site involves glutamate 340. Residues histidine 343 and histidine 349 each coordinate Zn(2+). An N-linked (GlcNAc...) asparagine glycan is attached at asparagine 377. The Disintegrin domain maps to 407–493 (PPVCGNDILE…DCPIDHFHRN (87 aa)). Residues 471–473 (ECD) carry the D/ECD-tripeptide motif.

The protein belongs to the venom metalloproteinase (M12B) family. P-II subfamily. In terms of assembly, monomer. Zn(2+) is required as a cofactor. In terms of tissue distribution, expressed by the venom gland.

The protein localises to the secreted. Its function is as follows. Snake venom zinc metalloprotease that possesses hemorrhagic activity and degrades alpha chain of fibrinogen (FGA). May inhibit alpha-2/beta-1 integrin (ITGA2/ITGB1). In Bitis arietans (African puff adder), this protein is Zinc metalloproteinase-disintegrin BA-5A.